The sequence spans 204 residues: IMPACT family member YigZ (204 aa).

This sequence belongs to the IMPACT family. In terms of assembly, monomer.

The protein is IMPACT family member YigZ (yigZ) of Escherichia coli (strain K12).